A 515-amino-acid polypeptide reads, in one-letter code: 2-isopropylmalate synthase (515 aa).

The 263-residue stretch at 4–266 (IKIFDTTLRD…ETGLILKETK (263 aa)) folds into the Pyruvate carboxyltransferase domain. Positions 13, 201, 203, and 237 each coordinate Mn(2+). The regulatory domain stretch occupies residues 392–515 (KLIQFGVSYD…ANLTRLVYES (124 aa)).

This sequence belongs to the alpha-IPM synthase/homocitrate synthase family. LeuA type 1 subfamily. As to quaternary structure, homodimer. Mn(2+) is required as a cofactor.

The protein resides in the cytoplasm. The enzyme catalyses 3-methyl-2-oxobutanoate + acetyl-CoA + H2O = (2S)-2-isopropylmalate + CoA + H(+). Its pathway is amino-acid biosynthesis; L-leucine biosynthesis; L-leucine from 3-methyl-2-oxobutanoate: step 1/4. In terms of biological role, catalyzes the condensation of the acetyl group of acetyl-CoA with 3-methyl-2-oxobutanoate (2-ketoisovalerate) to form 3-carboxy-3-hydroxy-4-methylpentanoate (2-isopropylmalate). The protein is 2-isopropylmalate synthase of Oceanobacillus iheyensis (strain DSM 14371 / CIP 107618 / JCM 11309 / KCTC 3954 / HTE831).